The sequence spans 245 residues: Large ribosomal subunit protein uL29m (245 aa).

Composition is skewed to low complexity over residues Ser36–Ser49 and Ser234–Ile245. Disordered regions lie at residues Ser36 to His98 and Arg207 to Ile245.

Belongs to the universal ribosomal protein uL29 family. As to quaternary structure, component of the mitochondrial large ribosomal subunit. Mature mitochondrial ribosomes consist of a small (37S) and a large (54S) subunit. The 37S subunit contains at least 33 different proteins and 1 molecule of RNA (15S). The 54S subunit contains at least 45 different proteins and 1 molecule of RNA (21S).

It localises to the mitochondrion. The sequence is that of Large ribosomal subunit protein uL29m (MRPL4) from Coccidioides immitis (strain RS) (Valley fever fungus).